A 187-amino-acid chain; its full sequence is Small ribosomal subunit protein uS5 (187 aa).

In terms of domain architecture, S5 DRBM spans 21-84; it reads MVDKLVHINR…ESAKRDMIFV (64 aa).

The protein belongs to the universal ribosomal protein uS5 family. As to quaternary structure, part of the 30S ribosomal subunit. Contacts proteins S4 and S8.

Functionally, with S4 and S12 plays an important role in translational accuracy. Its function is as follows. Located at the back of the 30S subunit body where it stabilizes the conformation of the head with respect to the body. This Mesorhizobium japonicum (strain LMG 29417 / CECT 9101 / MAFF 303099) (Mesorhizobium loti (strain MAFF 303099)) protein is Small ribosomal subunit protein uS5.